The primary structure comprises 810 residues: Transmembrane channel-like protein 6 (810 aa).

Residues methionine 1–glutamate 26 form a disordered region. At methionine 1 to arginine 205 the chain is on the lumenal side. Acidic residues predominate over residues threonine 15–glutamate 26. Threonine 88 carries the phosphothreonine modification. Arginine 93 bears the Omega-N-methylarginine mark. N-linked (GlcNAc...) asparagine glycosylation occurs at asparagine 102. At threonine 104 the chain carries Phosphothreonine. Serine 136 carries the post-translational modification Phosphoserine. A helical transmembrane segment spans residues tyrosine 206–alanine 226. Over arginine 227–threonine 253 the chain is Cytoplasmic. The helical transmembrane segment at leucine 254–alanine 274 threads the bilayer. Residues alanine 275–methionine 338 lie on the Lumenal side of the membrane. Residue asparagine 311 is glycosylated (N-linked (GlcNAc...) asparagine). A helical membrane pass occupies residues proline 339–tyrosine 359. Residues serine 360–glutamine 429 are Cytoplasmic-facing. Residues valine 430–alanine 450 form a helical membrane-spanning segment. Over valine 451 to glycine 468 the chain is Lumenal. The chain crosses the membrane as a helical span at residues valine 469 to phenylalanine 489. The Cytoplasmic segment spans residues arginine 490–glutamate 504. The helical transmembrane segment at valine 505–tyrosine 525 threads the bilayer. Residues histidine 526–methionine 552 lie on the Lumenal side of the membrane. Residues valine 553 to isoleucine 573 traverse the membrane as a helical segment. Residues serine 574–tryptophan 603 lie on the Cytoplasmic side of the membrane. A helical membrane pass occupies residues leucine 604–phenylalanine 624. Residues histidine 625 to threonine 649 lie on the Lumenal side of the membrane. The chain crosses the membrane as a helical span at residues valine 650 to alanine 670. Residues valine 671–threonine 721 lie on the Cytoplasmic side of the membrane. The chain crosses the membrane as a helical span at residues phenylalanine 722–valine 742. Topologically, residues lysine 743–proline 810 are lumenal. Residues glutamate 775–proline 810 form a disordered region. Residues alanine 793 to proline 810 are compositionally biased toward basic and acidic residues.

Belongs to the TMC family. As to quaternary structure, interacts with TMC8. Interacts and forms a complex with TMC8 and CIB1; the interaction stabilizes each component of the complex. Interacts and forms a complex with TMC8 and SLC30A1/ZNT1; the interaction regulates zinc transport into the ER. As to expression, widely expressed. Highly expressed in thymus, lung and spleen. Expressed in lymphocytes and peripheral lymphocytes. Expressed in small and medium dorsal root ganglion (DRG) neurons.

The protein localises to the endoplasmic reticulum membrane. In terms of biological role, acts as a regulatory protein involved in the regulation of numerous cellular processes. Together with its homolog TMC8/EVER2, forms a complex with calcium-binding protein CIB1 in lymphocytes and keratynocytes where TMC6 and TMC8 stabilize CIB1 and reciprocally. Together with TMC8, also forms a complex with and activates zinc transporter ZNT1 at the ER membrane of keratynocytes, thereby facilitating zinc uptake into the ER. Down-regulates the activity of transcription factors induced by zinc and cytokines. Also plays a role in thermal sensation by inhibiting the M-channel (KCNQ2-KCNQ3 channel) current in primary sensory neurons. In Mus musculus (Mouse), this protein is Transmembrane channel-like protein 6.